Reading from the N-terminus, the 458-residue chain is Phosphoglucosamine mutase (458 aa).

Ser-100 acts as the Phosphoserine intermediate in catalysis. Mg(2+)-binding residues include Ser-100, Asp-254, Asp-256, and Asp-258. Ser-100 is subject to Phosphoserine.

The protein belongs to the phosphohexose mutase family. The cofactor is Mg(2+). In terms of processing, activated by phosphorylation.

The enzyme catalyses alpha-D-glucosamine 1-phosphate = D-glucosamine 6-phosphate. Functionally, catalyzes the conversion of glucosamine-6-phosphate to glucosamine-1-phosphate. The chain is Phosphoglucosamine mutase from Nocardia farcinica (strain IFM 10152).